The following is a 230-amino-acid chain: Probable carboxylesterase Culp2 (230 aa).

A signal peptide (tat-type signal) is located at residues 1–32 (MNDLLTRRLLTMGAAAAMLAAVLLLTPITVPA). An intrachain disulfide couples Cys45 to Cys112. Ser123 (nucleophile) is an active-site residue. A disulfide bond links Cys185 and Cys192. Residue Asp189 is part of the active site. His207 acts as the Proton donor/acceptor in catalysis.

It belongs to the cutinase family. Predicted to be exported by the Tat system. The position of the signal peptide cleavage has not been experimentally proven.

The protein localises to the secreted. The protein resides in the cell surface. This chain is Probable carboxylesterase Culp2 (cut2), found in Mycobacterium bovis (strain ATCC BAA-935 / AF2122/97).